The primary structure comprises 458 residues: Oxysterol-binding protein-related protein 3B (458 aa).

3 disordered regions span residues 47 to 66, 370 to 401, and 431 to 458; these read VINP…RGRW, DMSK…AFTP, and RAAA…DLST. The span at 375 to 396 shows a compositional bias: basic and acidic residues; the sequence is GYEKSSMEERQRAEKRTREEKG. Residues 443 to 458 are compositionally biased toward polar residues; sequence PKSIQFNPWQFQDLST.

This sequence belongs to the OSBP family. As to expression, expressed in roots, leaves, stems and flowers.

Functionally, may be involved in the transport of sterols. The polypeptide is Oxysterol-binding protein-related protein 3B (ORP3B) (Arabidopsis thaliana (Mouse-ear cress)).